The chain runs to 331 residues: Putative peptidyl-prolyl cis-trans isomerase RC0542 (331 aa).

Residues glutamate 33–proline 54 form a disordered region. One can recognise a PPIase FKBP-type domain in the interval glycine 128–glutamate 226.

The enzyme catalyses [protein]-peptidylproline (omega=180) = [protein]-peptidylproline (omega=0). In Rickettsia conorii (strain ATCC VR-613 / Malish 7), this protein is Putative peptidyl-prolyl cis-trans isomerase RC0542.